A 250-amino-acid chain; its full sequence is Tryptophan synthase alpha chain (250 aa).

Active-site proton acceptor residues include glutamate 31 and aspartate 42.

It belongs to the TrpA family. In terms of assembly, tetramer of two alpha and two beta chains.

It carries out the reaction (1S,2R)-1-C-(indol-3-yl)glycerol 3-phosphate + L-serine = D-glyceraldehyde 3-phosphate + L-tryptophan + H2O. It participates in amino-acid biosynthesis; L-tryptophan biosynthesis; L-tryptophan from chorismate: step 5/5. Its function is as follows. The alpha subunit is responsible for the aldol cleavage of indoleglycerol phosphate to indole and glyceraldehyde 3-phosphate. The protein is Tryptophan synthase alpha chain of Staphylococcus carnosus (strain TM300).